The following is a 278-amino-acid chain: Putative glycosyltransferase EpsE (278 aa).

Belongs to the glycosyltransferase 2 family.

In terms of biological role, may be involved in the production of the exopolysaccharide (EPS) component of the extracellular matrix during biofilm formation. EPS is responsible for the adhesion of chains of cells into bundles. Required for biofilm maintenance. This is Putative glycosyltransferase EpsE (epsE) from Bacillus subtilis (strain 168).